We begin with the raw amino-acid sequence, 819 residues long: Ent-beyerene synthase KSL2, chloroplastic (819 aa).

Residues 1-58 (MLPCLFPAYGSVVACKPSAIDRSPFGLLSQPKQTNRTLIRRPKVTKAFMAIEAMRHCS) constitute a chloroplast transit peptide. Low complexity predominate over residues 58–76 (SSSSSSEEGGAAATTAARS). The tract at residues 58–77 (SSSSSSEEGGAAATTAARSA) is disordered. Mg(2+)-binding residues include aspartate 567, aspartate 571, asparagine 711, serine 715, and glutamate 719. The DDXXD motif signature appears at 567 to 571 (DDFFD).

The protein belongs to the terpene synthase family. It depends on Mg(2+) as a cofactor. Expressed in roots. Highly expressed in stems, flowers and panicle.

The protein resides in the plastid. It localises to the chloroplast. It catalyses the reaction ent-copalyl diphosphate = ent-beyerene + diphosphate. The enzyme catalyses ent-copalyl diphosphate = ent-kaur-16-ene + diphosphate. The protein operates within secondary metabolite biosynthesis; terpenoid biosynthesis. In terms of biological role, diterpene cyclase involved in jasmonic acid-dependent defense mechanisms in roots by mediating the biosynthesis of labdane-related diterpenoids (LRDs) natural products such as ent-beyerene, an antimicrobial compound. Catalyzes the cyclization of ent-CDP into ent-beyerene as a major and ent-kaurene as a minor product. May be involved in the catalysis of an early step of the gibberellin (GA) biosynthesis pathway. This is Ent-beyerene synthase KSL2, chloroplastic from Oryza sativa subsp. japonica (Rice).